Reading from the N-terminus, the 477-residue chain is Otolin-1 (477 aa).

A signal peptide spans 1–23 (MWMFSWLCAILIILAIAGMNTIA). Disordered stretches follow at residues 28–55 (HTKFTKKSEEREMPKGLKPSSGPPPEEE) and 111–337 (QKGE…KGEL). The span at 33–42 (KKSEEREMPK) shows a compositional bias: basic and acidic residues. Positions 116 to 175 (GETGQPGPKGEAGNLGIPGPPGVVGPQGPRGYKGEKGLKGERGDQGVPGYPGKPGAQGEP) constitute a Collagen-like 1 domain. Hydroxyproline is present on residues proline 133 and proline 136. Basic and acidic residues predominate over residues 147 to 159 (YKGEKGLKGERGD). 3 positions are modified to hydroxyproline: proline 163, proline 166, and proline 169. Lysine 178 is modified (5-hydroxylysine). O-linked (Gal...) hydroxylysine glycosylation occurs at lysine 178. Over residues 182 to 191 (GNIGLGGVKG) the composition is skewed to gly residues. Asparagine 202 carries N-linked (GlcNAc...) asparagine glycosylation. 2 consecutive Collagen-like domains span residues 209–268 (GDQG…KGSK) and 278–337 (GRNG…KGEL). At proline 223 the chain carries Hydroxyproline. Basic and acidic residues-rich tracts occupy residues 226 to 240 (KGEKGEMGEKGEMGD) and 247 to 277 (SGERGGKGQKGEGGMKGEKGSKGDSGMEGKS). 2 positions are modified to hydroxyproline: proline 283 and proline 301. Positions 298 to 310 (LGPPGLLGPTGPK) are enriched in low complexity. 5-hydroxylysine is present on lysine 310. Lysine 310 carries an O-linked (Gal...) hydroxylysine glycan. One can recognise a C1q domain in the interval 338 to 473 (ARVPRSAFSA…GFLLYPEETS (136 aa)). Residue asparagine 381 is glycosylated (N-linked (GlcNAc...) asparagine).

This sequence belongs to the OTOL1 family. In terms of assembly, homooligomer; disulfide-linked; probably forms homotrimers. Interacts with OC90. Interacts with CBLN1.

The protein resides in the secreted. The protein localises to the extracellular space. Its subcellular location is the extracellular matrix. In terms of biological role, collagen-like protein specifically expressed in the inner ear, which provides an organic scaffold for otoconia, a calcium carbonate structure in the saccule and utricle of the ear. Acts as a scaffold for biomineralization: sequesters calcium and forms interconnecting fibrils between otoconia that are incorporated into the calcium crystal structure. Together with OC90, modulates calcite crystal morphology and growth kinetics. This chain is Otolin-1, found in Homo sapiens (Human).